We begin with the raw amino-acid sequence, 37 residues long: Photosystem I reaction center subunit VIII (37 aa).

Residues 10 to 30 (IFVPLVGLVFPAIAMASLSLY) form a helical membrane-spanning segment.

It belongs to the PsaI family.

It localises to the plastid. The protein resides in the chloroplast thylakoid membrane. Functionally, may help in the organization of the PsaL subunit. This is Photosystem I reaction center subunit VIII from Gossypium barbadense (Sea Island cotton).